We begin with the raw amino-acid sequence, 376 residues long: Acetate kinase (376 aa).

Asparagine 7 contacts Mg(2+). Lysine 14 provides a ligand contact to ATP. Arginine 71 serves as a coordination point for substrate. The active-site Proton donor/acceptor is aspartate 128. Residues 188 to 192 (HLGNG), 262 to 264 (DFR), and 310 to 314 (GVGEN) contribute to the ATP site. Residue glutamate 364 coordinates Mg(2+).

Belongs to the acetokinase family. As to quaternary structure, homodimer. Mg(2+) serves as cofactor. Requires Mn(2+) as cofactor.

It localises to the cytoplasm. It catalyses the reaction acetate + ATP = acetyl phosphate + ADP. It functions in the pathway metabolic intermediate biosynthesis; acetyl-CoA biosynthesis; acetyl-CoA from acetate: step 1/2. Functionally, catalyzes the formation of acetyl phosphate from acetate and ATP. Can also catalyze the reverse reaction. In Mycolicibacterium smegmatis (strain ATCC 700084 / mc(2)155) (Mycobacterium smegmatis), this protein is Acetate kinase.